The primary structure comprises 1080 residues: DNA polymerase II large subunit (1080 aa).

The protein belongs to the archaeal DNA polymerase II family. In terms of assembly, heterodimer of a large subunit and a small subunit.

It catalyses the reaction DNA(n) + a 2'-deoxyribonucleoside 5'-triphosphate = DNA(n+1) + diphosphate. It carries out the reaction Exonucleolytic cleavage in the 3'- to 5'-direction to yield nucleoside 5'-phosphates.. Possesses two activities: a DNA synthesis (polymerase) and an exonucleolytic activity that degrades single-stranded DNA in the 3'- to 5'-direction. Has a template-primer preference which is characteristic of a replicative DNA polymerase. This is DNA polymerase II large subunit from Picrophilus torridus (strain ATCC 700027 / DSM 9790 / JCM 10055 / NBRC 100828 / KAW 2/3).